The sequence spans 753 residues: MAP/microtubule affinity-regulating kinase 3 (753 aa).

The disordered stretch occupies residues 1-36 (MSTRTPLPTVNERDTENHTSHGDGRQEVTSRTSRSG). A compositionally biased stretch (basic and acidic residues) spans 11–28 (NERDTENHTSHGDGRQEV). Ser-42 carries the phosphoserine modification. Residues 56-307 (YRLLKTIGKG…LEQIMKDRWI (252 aa)) enclose the Protein kinase domain. Residues 62–70 (IGKGNFAKV) and Lys-85 each bind ATP. The active-site Proton acceptor is Asp-178. Thr-211 carries the phosphothreonine; by LKB1 modification. Residues 326–365 (ISDQKRIDIMVGMGYSQEEIQESLSKMKYDEITATYLLLG) form the UBA domain. Phosphoserine is present on residues Ser-368, Ser-374, Ser-376, Ser-380, Ser-383, Leu-384, Ser-400, Arg-407, Ser-419, and Ser-469. Positions 370–600 (ELDASDSSSS…TPLSQTRSRG (231 aa)) are disordered. Residues 374 to 385 (SDSSSSSNLSLA) are compositionally biased toward low complexity. A compositionally biased stretch (polar residues) spans 391 to 400 (SDLNNSTGQS). 2 stretches are compositionally biased toward polar residues: residues 490–513 (STVP…CSER) and 521–548 (VIQN…SSAA). A phosphoserine mark is found at Ser-540 and Ser-543. Residue Thr-549 is modified to Phosphothreonine. Position 564 is a phosphothreonine; by PKC/PRKCZ (Thr-564). A phosphoserine mark is found at Ser-583, Ser-598, Ser-601, and Ser-643. Residues 584–600 (PSLSHEATPLSQTRSRG) show a composition bias toward polar residues. The interval 632–655 (NGRYEGSSRNVSAEQKDENKEAKP) is disordered. Residues 645 to 655 (EQKDENKEAKP) show a composition bias toward basic and acidic residues. One can recognise a KA1 domain in the interval 704-753 (DGHAENLVQWEMEVCKLPRLSLNGVRFKRISGTSIAFKNIASKIANELKL).

It belongs to the protein kinase superfamily. CAMK Ser/Thr protein kinase family. SNF1 subfamily. As to quaternary structure, interacts with MAPT/TAU. Interacts with DLG5 (via coiled-coil domain). Interacts with STK3/MST2 and STK4/MST1 in the presence of DLG5. Interacts with YWHAB, YWHAG, YWHAQ and YWHAZ. Interacts with PKP2 (via N-terminus). Interacts with CDC25C. Interacts with KSR1. Phosphorylated at Thr-211 by STK11/LKB1 in complex with STE20-related adapter-alpha (STRADA) pseudo kinase and CAB39. Phosphorylation at Thr-564 by PRKCZ/aPKC inhibits the kinase activity. In terms of tissue distribution, ubiquitous.

It localises to the cell membrane. The protein localises to the cell projection. It is found in the dendrite. The protein resides in the cytoplasm. The enzyme catalyses L-seryl-[protein] + ATP = O-phospho-L-seryl-[protein] + ADP + H(+). It carries out the reaction L-threonyl-[protein] + ATP = O-phospho-L-threonyl-[protein] + ADP + H(+). Activated by phosphorylation on Thr-211. Inhibited by phosphorylation on Thr-564. Functionally, serine/threonine-protein kinase. Involved in the specific phosphorylation of microtubule-associated proteins for MAP2 and MAP4. Phosphorylates the microtubule-associated protein MAPT/TAU. Phosphorylates CDC25C on 'Ser-216'. Regulates localization and activity of some histone deacetylases by mediating phosphorylation of HDAC7, promoting subsequent interaction between HDAC7 and 14-3-3 and export from the nucleus. Regulates localization and activity of MITF by mediating its phosphorylation, promoting subsequent interaction between MITF and 14-3-3 and retention in the cytosol. Negatively regulates the Hippo signaling pathway and antagonizes the phosphorylation of LATS1. Cooperates with DLG5 to inhibit the kinase activity of STK3/MST2 toward LATS1. Phosphorylates PKP2 and KSR1. In Homo sapiens (Human), this protein is MAP/microtubule affinity-regulating kinase 3 (MARK3).